We begin with the raw amino-acid sequence, 183 residues long: Probable chorismate pyruvate-lyase (183 aa).

Arg79, Leu115, and Glu168 together coordinate substrate.

This sequence belongs to the UbiC family.

Its subcellular location is the cytoplasm. It catalyses the reaction chorismate = 4-hydroxybenzoate + pyruvate. It functions in the pathway cofactor biosynthesis; ubiquinone biosynthesis. Removes the pyruvyl group from chorismate, with concomitant aromatization of the ring, to provide 4-hydroxybenzoate (4HB) for the ubiquinone pathway. The protein is Probable chorismate pyruvate-lyase of Chromohalobacter salexigens (strain ATCC BAA-138 / DSM 3043 / CIP 106854 / NCIMB 13768 / 1H11).